A 1043-amino-acid polypeptide reads, in one-letter code: F-box DNA helicase 1 (1043 aa).

Positions Gln-30–Ser-56 are disordered. The short motif at Gln-57–Phe-64 is the PIP-box element. Residues Cys-101–Pro-191 are disordered. The residue at position 124 (Ser-124) is a Phosphoserine. Positions Ser-138–Ala-184 constitute an F-box domain. The span at Arg-158–Thr-170 shows a compositional bias: basic and acidic residues. The 264-residue stretch at Thr-442–Gly-705 folds into the UvrD-like helicase ATP-binding domain. Ala-463 to Thr-470 serves as a coordination point for ATP. The APIM motif signature appears at Lys-807–Arg-811.

It belongs to the helicase family. UvrD subfamily. In terms of assembly, part of the SCF (SKP1-CUL1-F-box) E3 ubiquitin-protein ligase complex SCF(FBH1) composed of CUL1, SKP1, RBX1 and FBH1. Interacts with RAD51. Interacts with RPA2. Interacts (via PIP-box and RanBP2-type zinc finger) with PCNA. Post-translationally, ubiquitinated. Ubiquitination by the DCX(DTL) complex, also named CRL4(CDT2), leading to its degradation: ubiquitination takes place after its localization to DNA damage sites, possibly to facilitate the translesion synthesis (TLS) pathway.

The protein resides in the nucleus. It is found in the chromosome. It catalyses the reaction Couples ATP hydrolysis with the unwinding of duplex DNA by translocating in the 3'-5' direction.. The catalysed reaction is ATP + H2O = ADP + phosphate + H(+). It participates in protein modification; protein ubiquitination. 3'-5' DNA helicase and substrate-recognition component of the SCF(FBH1) E3 ubiquitin ligase complex that plays a key role in response to stalled/damaged replication forks. Involved in genome maintenance by acting as an anti-recombinogenic helicase and preventing extensive strand exchange during homologous recombination: promotes RAD51 filament dissolution from stalled forks, thereby inhibiting homologous recombination and preventing excessive recombination. Also promotes cell death and DNA double-strand breakage in response to replication stress: together with MUS81, promotes the endonucleolytic DNA cleavage following prolonged replication stress via its helicase activity, possibly to eliminate cells with excessive replication stress. Plays a major role in remodeling of stalled DNA forks by catalyzing fork regression, in which the fork reverses and the two nascent DNA strands anneal. In addition to the helicase activity, also acts as the substrate-recognition component of the SCF(FBH1) E3 ubiquitin ligase complex, a complex that mediates ubiquitination of RAD51, leading to regulate RAD51 subcellular location. In Homo sapiens (Human), this protein is F-box DNA helicase 1.